We begin with the raw amino-acid sequence, 133 residues long: Small ribosomal subunit protein uS8 (133 aa).

This sequence belongs to the universal ribosomal protein uS8 family. As to quaternary structure, part of the 30S ribosomal subunit. Contacts proteins S5 and S12.

Its function is as follows. One of the primary rRNA binding proteins, it binds directly to 16S rRNA central domain where it helps coordinate assembly of the platform of the 30S subunit. The polypeptide is Small ribosomal subunit protein uS8 (Deinococcus deserti (strain DSM 17065 / CIP 109153 / LMG 22923 / VCD115)).